The chain runs to 430 residues: tRNA(Ile)-lysidine synthase (430 aa).

Residue Ser-21–Ser-26 participates in ATP binding.

This sequence belongs to the tRNA(Ile)-lysidine synthase family.

The protein localises to the cytoplasm. The enzyme catalyses cytidine(34) in tRNA(Ile2) + L-lysine + ATP = lysidine(34) in tRNA(Ile2) + AMP + diphosphate + H(+). In terms of biological role, ligates lysine onto the cytidine present at position 34 of the AUA codon-specific tRNA(Ile) that contains the anticodon CAU, in an ATP-dependent manner. Cytidine is converted to lysidine, thus changing the amino acid specificity of the tRNA from methionine to isoleucine. This chain is tRNA(Ile)-lysidine synthase, found in Salmonella heidelberg (strain SL476).